Reading from the N-terminus, the 379-residue chain is uncharacterized protein (379 aa).

A helical membrane pass occupies residues 9-26 (YFQLITTIFLISSITIAA).

The protein to A.liquefaciens L-sorbosone dehydrogenase.

The protein localises to the membrane. This is an uncharacterized protein from Borreliella burgdorferi (strain ATCC 35210 / DSM 4680 / CIP 102532 / B31) (Borrelia burgdorferi).